The chain runs to 347 residues: Anthranilate phosphoribosyltransferase (347 aa).

5-phospho-alpha-D-ribose 1-diphosphate contacts are provided by residues Gly82, 85–86 (GD), Thr90, 92–95 (NIST), 110–118 (KHGNRAITS), and Thr122. Residue Gly82 coordinates anthranilate. Ser94 lines the Mg(2+) pocket. Asn113 serves as a coordination point for anthranilate. An anthranilate-binding site is contributed by Arg168. Positions 226 and 227 each coordinate Mg(2+).

It belongs to the anthranilate phosphoribosyltransferase family. As to quaternary structure, homodimer. Mg(2+) serves as cofactor.

It catalyses the reaction N-(5-phospho-beta-D-ribosyl)anthranilate + diphosphate = 5-phospho-alpha-D-ribose 1-diphosphate + anthranilate. It functions in the pathway amino-acid biosynthesis; L-tryptophan biosynthesis; L-tryptophan from chorismate: step 2/5. Catalyzes the transfer of the phosphoribosyl group of 5-phosphorylribose-1-pyrophosphate (PRPP) to anthranilate to yield N-(5'-phosphoribosyl)-anthranilate (PRA). The protein is Anthranilate phosphoribosyltransferase of Caulobacter sp. (strain K31).